An 89-amino-acid chain; its full sequence is Elongation factor 1-beta (89 aa).

It belongs to the EF-1-beta/EF-1-delta family.

Promotes the exchange of GDP for GTP in EF-1-alpha/GDP, thus allowing the regeneration of EF-1-alpha/GTP that could then be used to form the ternary complex EF-1-alpha/GTP/AAtRNA. The chain is Elongation factor 1-beta from Methanosarcina barkeri (strain Fusaro / DSM 804).